A 173-amino-acid polypeptide reads, in one-letter code: Alpha-crystallin A chain (173 aa).

An N-acetylmethionine modification is found at methionine 1. A required for complex formation with BFSP1 and BFSP2 region spans residues 1 to 63 (MDVTIQHPWF…RTVLDSGISE (63 aa)). Glutamine 6 is modified (deamidated glutamine; partial). Phosphoserine is present on serine 45. At glutamine 50 the chain carries Deamidated glutamine; partial. The 111-residue stretch at 52 to 162 (LFRTVLDSGI…SHSERAIPVS (111 aa)) folds into the sHSP domain. Lysine 99 carries the N6-acetyllysine modification. Position 100 (histidine 100) interacts with Zn(2+). Position 101 is a deamidated asparagine; partial (asparagine 101). Residues glutamate 102 and histidine 107 each contribute to the Zn(2+) site. Serine 122 bears the Phosphoserine mark. Asparagine 123 is subject to Deamidated asparagine; partial. Cysteines 131 and 142 form a disulfide. Deamidated glutamine; partial is present on glutamine 147. Positions 147 to 173 (QSGMDASHSERAIPVSREEKPSSAPSS) are disordered. Residues 153–167 (SHSERAIPVSREEKP) are compositionally biased toward basic and acidic residues. Residue histidine 154 coordinates Zn(2+). An O-linked (GlcNAc) serine glycan is attached at serine 162.

The protein belongs to the small heat shock protein (HSP20) family. In terms of assembly, heteromer composed of three CRYAA and one CRYAB subunits. Inter-subunit bridging via zinc ions enhances stability, which is crucial as there is no protein turn over in the lens. Can also form homodimers and homotetramers (dimers of dimers) which serve as the building blocks of homooligomers. Within homooligomers, the zinc-binding motif is created from residues of 3 different molecules. His-100 and Glu-102 from one molecule are ligands of the zinc ion, and His-107 and His-154 residues from additional molecules complete the site with tetrahedral coordination geometry. Part of a complex required for lens intermediate filament formation composed of BFSP1, BFSP2 and CRYAA. In terms of processing, undergoes age-dependent proteolytical cleavage at the C-terminus.

It is found in the cytoplasm. Its subcellular location is the nucleus. Functionally, contributes to the transparency and refractive index of the lens. In its oxidized form (absence of intramolecular disulfide bond), acts as a chaperone, preventing aggregation of various proteins under a wide range of stress conditions. Required for the correct formation of lens intermediate filaments as part of a complex composed of BFSP1, BFSP2 and CRYAA. The polypeptide is Alpha-crystallin A chain (CRYAA) (Procavia capensis (Rock hyrax)).